Here is a 326-residue protein sequence, read N- to C-terminus: MSIEVRNVSKNFNAFKALNNISLDIQSGELVALLGPSGCGKTTLLRIIAGLETPDDGSIVFHGEDVSGHDVRDRNVGFVFQHYALFRHMTVFDNVAFGLRMKPKSERPNETRIAEKVHELLNMVQLDWLADRYPEQLSGGQRQRIALARALAVEPKVLLLDEPFGALDAKVRKELRRWLARLHEDINLTSVFVTHDQEEAMEVADRIVVMNKGVIEQIGSPGEVYENPSNDFVYHFLGDSNRLSLGDEGHVLFRPHEVSLSRQEIEDHHAAEVRDIRPLGATTRVTLKVEGQNELIEAEVVKDHDSLVGLAKGETLFFKPKVWQKL.

The ABC transporter domain occupies 3–237 (IEVRNVSKNF…PSNDFVYHFL (235 aa)). 35–42 (GPSGCGKT) contacts ATP.

This sequence belongs to the ABC transporter superfamily. Sulfate/tungstate importer (TC 3.A.1.6) family. The complex is composed of two ATP-binding proteins (CysA), two transmembrane proteins (CysT and CysW) and a solute-binding protein (CysP).

Its subcellular location is the cell inner membrane. The catalysed reaction is sulfate(out) + ATP + H2O = sulfate(in) + ADP + phosphate + H(+). The enzyme catalyses thiosulfate(out) + ATP + H2O = thiosulfate(in) + ADP + phosphate + H(+). Its function is as follows. Part of the ABC transporter complex CysAWTP involved in sulfate/thiosulfate import. Responsible for energy coupling to the transport system. The sequence is that of Sulfate/thiosulfate import ATP-binding protein CysA from Pseudomonas syringae pv. tomato (strain ATCC BAA-871 / DC3000).